The primary structure comprises 357 residues: Decorin (357 aa).

The first 16 residues, 1–16 (MRLVLLFVLLLPVCLA), serve as a signal peptide directing secretion. Positions 17–30 (TRFHQKGLFDFMIE) are excised as a propeptide. O-linked (Xyl...) (glycosaminoglycan) serine glycosylation occurs at serine 46. Disulfide bonds link cysteine 52–cysteine 58 and cysteine 56–cysteine 65. LRR repeat units lie at residues 71 to 91 (ERVP…NNKI), 92 to 115 (TEIK…NNKI), 116 to 139 (SKIS…KNNL), 140 to 160 (KELP…ENEI), 161 to 184 (SKLR…TNPL), 185 to 210 (KSSG…DTNI), 211 to 231 (TSIP…GNKI), 232 to 255 (SKID…FNSI), 256 to 279 (SSVE…NNEL), 280 to 302 (VRVP…NNKI), 303 to 332 (ASIG…SNPV), and 333 to 357 (QYWE…GNYK). N-linked (GlcNAc...) asparagine glycosylation occurs at asparagine 209. An N-linked (GlcNAc...) asparagine glycan is attached at asparagine 260. Residues cysteine 311 and cysteine 344 are joined by a disulfide bond.

Belongs to the small leucine-rich proteoglycan (SLRP) family. SLRP class I subfamily. As to quaternary structure, binds to type I and type II collagen, to fibronectin and TGF-beta. Forms a ternary complex with MFAP2 and ELN. In terms of processing, the attached glycosaminoglycan chain can be either chondroitin sulfate or dermatan sulfate depending upon the tissue of origin.

It is found in the secreted. It localises to the extracellular space. The protein localises to the extracellular matrix. Its function is as follows. May affect the rate of fibrils formation. The polypeptide is Decorin (DCN) (Gallus gallus (Chicken)).